The primary structure comprises 557 residues: Calcium-dependent protein kinase 4 (557 aa).

The interval 1-72 (MGNTCRGSIG…LVSPRKASMN (72 aa)) is disordered. Gly-2 carries N-myristoyl glycine lipidation. A compositionally biased stretch (polar residues) spans 15 to 27 (QGYTQPEDSSCST). The span at 28 to 48 (NHNPSSGNSYSSSDNFSPTSN) shows a compositional bias: low complexity. One can recognise a Protein kinase domain in the interval 94-352 (YTLGRKLGQG…AHEVLCHPWI (259 aa)). ATP contacts are provided by residues 100–108 (LGQGQFGTT) and Lys-123. The Proton acceptor role is filled by Asp-218. The interval 358–388 (APDRALDPAVLSRLKQFSAMNKLKKMALRVI) is autoinhibitory domain. 4 EF-hand domains span residues 395 to 430 (EEIAGLREMFKAMDTDSSGAITFDELKAGLRKYGST), 431 to 466 (LKDTEIRELMDAADVDNSGTIDYGEFIAATVHLNKL), 467 to 502 (EREEHLMAAFQYFDKDGSGYITVDEVQQACIEHNMT), and 506 to 536 (FEDIIREVDQDNDGRIDYGEFVAMMQKGNPC). Ca(2+) is bound by residues Asp-408, Asp-410, Ser-412, Glu-419, Asp-444, Asp-446, Ser-448, Thr-450, Glu-455, Asp-480, Asp-482, Ser-484, Tyr-486, Glu-491, Asp-514, Asp-516, Asp-518, Arg-520, and Glu-525.

Belongs to the protein kinase superfamily. Ser/Thr protein kinase family. CDPK subfamily.

It localises to the membrane. It carries out the reaction L-seryl-[protein] + ATP = O-phospho-L-seryl-[protein] + ADP + H(+). The enzyme catalyses L-threonyl-[protein] + ATP = O-phospho-L-threonyl-[protein] + ADP + H(+). With respect to regulation, activated by calcium. Autophosphorylation may play an important role in the regulation of the kinase activity. Functionally, regulates the production of reactive oxygen species (ROS) by NADPH oxidase. The sequence is that of Calcium-dependent protein kinase 4 (CPK4) from Solanum tuberosum (Potato).